Consider the following 487-residue polypeptide: NADH-quinone oxidoreductase subunit N (487 aa).

13 helical membrane-spanning segments follow: residues 7–27, 38–58, 79–99, 111–131, 164–184, 207–227, 238–258, 276–296, 301–321, 328–348, 373–393, 406–426, and 451–471; these read ILGP…LLMV, LVGL…GLGA, YAKA…MVWL, ILVL…DLIA, FVLG…VYGF, LLIG…AVPF, APTP…LTLF, VIIL…IVQT, LMAY…AAGT, VLVY…VILA, AAAM…AGFF, GLFA…FYYL, and VILI…SVVV.

The protein belongs to the complex I subunit 2 family. In terms of assembly, NDH-1 is composed of 14 different subunits. Subunits NuoA, H, J, K, L, M, N constitute the membrane sector of the complex.

It localises to the cell inner membrane. It carries out the reaction a quinone + NADH + 5 H(+)(in) = a quinol + NAD(+) + 4 H(+)(out). NDH-1 shuttles electrons from NADH, via FMN and iron-sulfur (Fe-S) centers, to quinones in the respiratory chain. The immediate electron acceptor for the enzyme in this species is believed to be ubiquinone. Couples the redox reaction to proton translocation (for every two electrons transferred, four hydrogen ions are translocated across the cytoplasmic membrane), and thus conserves the redox energy in a proton gradient. This chain is NADH-quinone oxidoreductase subunit N, found in Rhodospirillum rubrum (strain ATCC 11170 / ATH 1.1.1 / DSM 467 / LMG 4362 / NCIMB 8255 / S1).